Here is an 83-residue protein sequence, read N- to C-terminus: Putative membrane protein insertion efficiency factor (83 aa).

The protein belongs to the UPF0161 family.

The protein resides in the cell inner membrane. Functionally, could be involved in insertion of integral membrane proteins into the membrane. The protein is Putative membrane protein insertion efficiency factor of Pelagibacter ubique (strain HTCC1062).